The primary structure comprises 250 residues: Ino eighty subunit 3 (250 aa).

Residues P29 to H70 are disordered. The span at S52–H70 shows a compositional bias: low complexity. Phosphoserine is present on residues S157 and S211.

As to quaternary structure, component of the chromatin-remodeling INO80 complex, at least composed of ARP4, ARP5, ARP8, RVB1, RVB2, TAF14, NHP10, IES1, IES3, IES4, IES6, ACT1, IES2, IES5 and INO80.

It localises to the nucleus. In terms of biological role, probably involved in transcription regulation via its interaction with the INO80 complex, a chromatin-remodeling complex. The protein is Ino eighty subunit 3 (IES3) of Saccharomyces cerevisiae (strain ATCC 204508 / S288c) (Baker's yeast).